The sequence spans 302 residues: MMDVDRSIRLVIVTGMSGAGKTQALKYLEDLGFFCVDNLPPSLMPKLAELFGQTEGKVSRLALGIDIRGGRFFHEILGALRQIAEIGVAYQILFMDASDEVLVRRYKETRRRHPLAAQGRVLDGIQRERRLLQELRGLATFIIDTTHMTPADLRKELNRRFGQDRESPHFHVNVVSFGFKHGAVLDADLVFDVRFLPNPHYVPDLQPLTGEDPAVVEYVMKWNVTQQFYRRLTGLIGFLLPHYVAEGKSLLTIAIGCTGGKHRSVCLANRLAHWIRERGYSVSVEHRDMPRPADRSDEEEQP.

15–22 (GMSGAGKT) contributes to the ATP binding site. 66-69 (DIRG) provides a ligand contact to GTP.

The protein belongs to the RapZ-like family.

In terms of biological role, displays ATPase and GTPase activities. The chain is Nucleotide-binding protein STH186 from Symbiobacterium thermophilum (strain DSM 24528 / JCM 14929 / IAM 14863 / T).